The following is a 449-amino-acid chain: Gallate transporter (449 aa).

Transmembrane regions (helical) follow at residues 26–46, 62–82, 92–112, 123–143, 155–175, 183–203, 262–282, 298–318, 326–346, 349–369, 388–408, and 414–434; these read WLILVLCFLIVLFDGFDVAVM, AAFGPVMSAGMVGLAIGALTA, KKVLLIAVSGFSLLSLACAFA, LLTGIALGAAMPNCTTLLAEY, IMFTGFNMGSGLGGFLSAWLI, VLLAGGLLPLALLPLLWWLLP, LALWLTYFMGLLVIYLTMGWL, TITGLFQIGGAVGAIVVGWIM, VIAIAYALGGLCIVSLGALSL, SLLVVGVAAAGFCMSGAQTAL, WMLGIGRFGAIFGSLIGGAVL, and LPLLFTLLGLPAFAAALAILA.

Belongs to the major facilitator superfamily. Sugar transporter (TC 2.A.1.1) family.

It is found in the membrane. Transporter that specifically mediates the uptake of gallate. The chain is Gallate transporter (galT) from Pseudomonas putida (Arthrobacter siderocapsulatus).